A 260-amino-acid polypeptide reads, in one-letter code: Uridylate kinase (260 aa).

Lys-29–Gly-32 provides a ligand contact to ATP. The segment at Gly-37–Gly-42 is involved in allosteric activation by GTP. Gly-71 lines the UMP pocket. The ATP site is built by Gly-72 and Arg-76. Residues Asp-91 and Ser-152–Thr-159 each bind UMP. Residues Thr-179, Tyr-185, and Asp-188 each coordinate ATP.

The protein belongs to the UMP kinase family. Homohexamer.

Its subcellular location is the cytoplasm. It catalyses the reaction UMP + ATP = UDP + ADP. Its pathway is pyrimidine metabolism; CTP biosynthesis via de novo pathway; UDP from UMP (UMPK route): step 1/1. Its activity is regulated as follows. Allosterically activated by GTP. Inhibited by UTP. Functionally, catalyzes the reversible phosphorylation of UMP to UDP. The sequence is that of Uridylate kinase from Synechocystis sp. (strain ATCC 27184 / PCC 6803 / Kazusa).